A 566-amino-acid polypeptide reads, in one-letter code: SRSF protein kinase 3 (566 aa).

Over residues 1-13 (MSASTGGGGGGDS) the composition is skewed to gly residues. Positions 1-60 (MSASTGGGGGGDSGSSSSSSSQASCGPEPSGSELAPPTPAPRMLQGLLGSDDEEQEDPKD) are disordered. Over residues 14-26 (GSSSSSSSQASCG) the composition is skewed to low complexity. A Phosphoserine modification is found at serine 50. The 486-residue stretch at 79 to 564 (YHVVRKLGWG…AADCLQHPWL (486 aa)) folds into the Protein kinase domain. ATP is bound by residues 85-93 (LGWGHFSTV) and lysine 108. The active-site Proton acceptor is aspartate 212. Positions 236–254 (EWQQSGAPPPSRSTVSTAP) are enriched in polar residues. Disordered stretches follow at residues 236-283 (EWQQ…LLEE) and 295-353 (EAAA…SGFS). The segment covering 263–278 (SKNKRKKMRRKRKQQK) has biased composition (basic residues). The residue at position 329 (serine 329) is a Phosphoserine. Low complexity predominate over residues 330–339 (PASSSPAPGG). Residues 344–353 (SPGSQTSGFS) are compositionally biased toward polar residues.

This sequence belongs to the protein kinase superfamily. In terms of tissue distribution, highly expressed in skeletal muscle, heart, uterus and parorchis. Weakly expressed in brain, stomach, small intestine and ovary.

The protein resides in the nucleus. The protein localises to the cytoplasm. It carries out the reaction L-seryl-[protein] + ATP = O-phospho-L-seryl-[protein] + ADP + H(+). It catalyses the reaction L-threonyl-[protein] + ATP = O-phospho-L-threonyl-[protein] + ADP + H(+). Its function is as follows. Serine/arginine-rich protein-specific kinase which specifically phosphorylates its substrates at serine residues located in regions rich in arginine/serine dipeptides, known as RS domains. Phosphorylates the SR splicing factor SRSF1 and the lamin-B receptor (LBR) in vitro. Required for normal muscle development. In Sus scrofa (Pig), this protein is SRSF protein kinase 3 (SRPK3).